The sequence spans 464 residues: UNC93-like protein 3 (464 aa).

Helical transmembrane passes span 31-51, 62-82, 84-104, 110-130, 160-180, 192-212, 251-271, 275-295, 313-333, 341-361, and 392-412; these read VHILSISFLLIFLAYGAAQNL, ISLGILYVSFMFCSMVASLVV, LMGSKNALVLGTTGYWLFVAA, WFTMVPASLYLGFAASIIWVG, EFWAMFACHQLFGNLITLALL, TLLMLVFLFSMTLGTILMFFI, LLIVPLLAYSGLQQAFVWAEF, IVTPAIGVSGVGGAMAVYGAL, ITFIVSGGAVAQASVFLWLLL, VLGTAYPLIMAAILGIGDGIL, and IAIVFFLSPYISLQAMLIVML.

Belongs to the unc-93 family.

The protein resides in the membrane. In Arabidopsis thaliana (Mouse-ear cress), this protein is UNC93-like protein 3.